The sequence spans 379 residues: Chaperone protein DnaJ (379 aa).

The 66-residue stretch at 5–70 folds into the J domain; that stretch reads DYYEVLGVGK…EKKAAYDQYG (66 aa). A CR-type zinc finger spans residues 139-217; that stretch reads GHEAQIRVPH…CHGQGKLKSQ (79 aa). Zn(2+) contacts are provided by cysteine 152, cysteine 155, cysteine 169, cysteine 172, cysteine 191, cysteine 194, cysteine 205, and cysteine 208. CXXCXGXG motif repeat units follow at residues 152–159, 169–176, 191–198, and 205–212; these read CDHCHGNG, CPTCHGAG, CPKCHGSG, and CTKCHGQG. The segment at 356 to 379 is disordered; that stretch reads VHEGGSRHSPQEQSWLDKVKSFFS.

Belongs to the DnaJ family. In terms of assembly, homodimer. Requires Zn(2+) as cofactor.

It is found in the cytoplasm. Its function is as follows. Participates actively in the response to hyperosmotic and heat shock by preventing the aggregation of stress-denatured proteins and by disaggregating proteins, also in an autonomous, DnaK-independent fashion. Unfolded proteins bind initially to DnaJ; upon interaction with the DnaJ-bound protein, DnaK hydrolyzes its bound ATP, resulting in the formation of a stable complex. GrpE releases ADP from DnaK; ATP binding to DnaK triggers the release of the substrate protein, thus completing the reaction cycle. Several rounds of ATP-dependent interactions between DnaJ, DnaK and GrpE are required for fully efficient folding. Also involved, together with DnaK and GrpE, in the DNA replication of plasmids through activation of initiation proteins. The polypeptide is Chaperone protein DnaJ (Cupriavidus pinatubonensis (strain JMP 134 / LMG 1197) (Cupriavidus necator (strain JMP 134))).